Reading from the N-terminus, the 310-residue chain is Methionyl-tRNA formyltransferase (310 aa).

110-113 (SLLP) provides a ligand contact to (6S)-5,6,7,8-tetrahydrofolate.

Belongs to the Fmt family.

It catalyses the reaction L-methionyl-tRNA(fMet) + (6R)-10-formyltetrahydrofolate = N-formyl-L-methionyl-tRNA(fMet) + (6S)-5,6,7,8-tetrahydrofolate + H(+). In terms of biological role, attaches a formyl group to the free amino group of methionyl-tRNA(fMet). The formyl group appears to play a dual role in the initiator identity of N-formylmethionyl-tRNA by promoting its recognition by IF2 and preventing the misappropriation of this tRNA by the elongation apparatus. The chain is Methionyl-tRNA formyltransferase from Streptomyces griseus subsp. griseus (strain JCM 4626 / CBS 651.72 / NBRC 13350 / KCC S-0626 / ISP 5235).